Reading from the N-terminus, the 226-residue chain is Isoprenyl transferase (226 aa).

The active site involves aspartate 12. Mg(2+) is bound at residue aspartate 12. Substrate contacts are provided by residues 13-16 (GNAR), tryptophan 17, lysine 25, histidine 29, and 57-59 (SSE). Residue asparagine 60 is the Proton acceptor of the active site. Substrate contacts are provided by residues tryptophan 61, arginine 63, arginine 174, and 180-182 (RIS). Glutamate 193 provides a ligand contact to Mg(2+).

It belongs to the UPP synthase family. Homodimer. Mg(2+) is required as a cofactor.

Catalyzes the condensation of isopentenyl diphosphate (IPP) with allylic pyrophosphates generating different type of terpenoids. In Rickettsia typhi (strain ATCC VR-144 / Wilmington), this protein is Isoprenyl transferase.